Consider the following 156-residue polypeptide: MSNQTVSELKDLTAKSATNYGFDVTDFKMFTHLNPLSIQVNIRHKNPDKKVTIDDCSILSQYIDEAIQGSSILDQPFNLEISSEGISDFLTEEKDFQTFKGFPVEVSYQDLKKIEQQTNGLLLKRTDNELQINQKGKTQRIPVEDVIQVRLTTPAG.

Belongs to the RimP family.

The protein resides in the cytoplasm. Required for maturation of 30S ribosomal subunits. The polypeptide is Ribosome maturation factor RimP (Prochlorococcus marinus (strain NATL1A)).